The primary structure comprises 751 residues: Diamine oxidase [copper-containing] (751 aa).

Residues M1 to A22 form the signal peptide. 2 N-linked (GlcNAc...) asparagine glycosylation sites follow: N61 and N110. The active-site Proton acceptor is the D373. A disulfide bond links C391 and C417. Y461 acts as the Schiff-base intermediate with substrate; via topaquinone in catalysis. Residue Y461 is modified to 2',4',5'-topaquinone. Cu(2+)-binding residues include H510 and H512. Ca(2+) contacts are provided by D519, L520, and D521. An N-linked (GlcNAc...) asparagine glycan is attached at N538. 6 residues coordinate Ca(2+): E562, F653, N656, E658, D664, and L665. H675 contacts Cu(2+). The N-linked (GlcNAc...) asparagine glycan is linked to N745.

This sequence belongs to the copper/topaquinone oxidase family. Homodimer; disulfide-linked. It depends on Cu(2+) as a cofactor. Requires Ca(2+) as cofactor. The cofactor is L-topaquinone. Post-translationally, topaquinone (TPQ) is generated by copper-dependent autoxidation of a specific tyrosyl residue. N-glycosylated.

It localises to the secreted. Its subcellular location is the extracellular space. The protein resides in the cell membrane. It catalyses the reaction histamine + O2 + H2O = imidazole-4-acetaldehyde + H2O2 + NH4(+). The enzyme catalyses N(tau)-methylhistamine + O2 + H2O = 1-methylimidazole-4-acetaldehyde + H2O2 + NH4(+). The catalysed reaction is putrescine + O2 + H2O = 4-aminobutanal + H2O2 + NH4(+). It carries out the reaction cadaverine + O2 + H2O = 5-aminopentanal + H2O2 + NH4(+). Its activity is regulated as follows. Inhibited by amiloride and amiloride analogs. Catalyzes the oxidative deamination of primary amines to the corresponding aldehydes with the concomitant production of hydrogen peroxide and ammonia. Its preferred substrates in vitro are the diamines histamine and 1-methylhistamine and it could therefore play a role in allergic and immune responses. Has a broad specificity for diamines and can also act on cadaverine and putrescine, two products of amino acid catabolism. It could also act on polyamines, like spermidine and spermine though less efficiently, and regulate various biological processes. The chain is Diamine oxidase [copper-containing] from Mus musculus (Mouse).